The following is a 234-amino-acid chain: Segregation and condensation protein A (234 aa).

This sequence belongs to the ScpA family. Component of a cohesin-like complex composed of ScpA, ScpB and the Smc homodimer, in which ScpA and ScpB bind to the head domain of Smc. The presence of the three proteins is required for the association of the complex with DNA.

The protein resides in the cytoplasm. Participates in chromosomal partition during cell division. May act via the formation of a condensin-like complex containing Smc and ScpB that pull DNA away from mid-cell into both cell halves. The chain is Segregation and condensation protein A from Streptococcus pyogenes serotype M3 (strain ATCC BAA-595 / MGAS315).